Reading from the N-terminus, the 190-residue chain is Transcription factor E (190 aa).

The HTH TFE/IIEalpha-type domain occupies 4–87; that stretch reads KNKALLEIAK…YWHLETKRLP (84 aa). Positions 170–190 are disordered; that stretch reads PSPKKEKKKTRAKAKRKTRKK. The segment covering 174–190 has biased composition (basic residues); sequence KEKKKTRAKAKRKTRKK.

The protein belongs to the TFE family. As to quaternary structure, monomer. Interaction with RNA polymerase subunits RpoF and RpoE is necessary for Tfe stimulatory transcription activity. Able to interact with Tbp and RNA polymerase in the absence of DNA promoter. Interacts both with the preinitiation and elongation complexes.

Transcription factor that plays a role in the activation of archaeal genes transcribed by RNA polymerase. Facilitates transcription initiation by enhancing TATA-box recognition by TATA-box-binding protein (Tbp), and transcription factor B (Tfb) and RNA polymerase recruitment. Not absolutely required for transcription in vitro, but particularly important in cases where Tbp or Tfb function is not optimal. It dynamically alters the nucleic acid-binding properties of RNA polymerases by stabilizing the initiation complex and destabilizing elongation complexes. Seems to translocate with the RNA polymerase following initiation and acts by binding to the non template strand of the transcription bubble in elongation complexes. The polypeptide is Transcription factor E (Pyrococcus abyssi (strain GE5 / Orsay)).